The sequence spans 419 residues: uncharacterized protein (419 aa).

The next 7 helical transmembrane spans lie at 16 to 36, 186 to 206, 235 to 255, 283 to 303, 318 to 338, 340 to 360, and 369 to 389; these read IMAKSFIISTVITVLLVLVVT, LVYIMLFVIYFSVIMYASMIA, LLGIGLVGITQLAIIIGAGSL, VIYAVIFFLLGYFLYATLAAF, ITPMTLLVVAGFMIAMFGLNA, DAGFITVTSFIPFFTPMIMFL, and FWQAAVGIGITLLTIVILAVI.

This sequence to M.jannaschii MJ1024.

The protein localises to the cell membrane. This is an uncharacterized protein from Bacillus subtilis (strain 168).